We begin with the raw amino-acid sequence, 122 residues long: Large ribosomal subunit protein uL14c (122 aa).

Belongs to the universal ribosomal protein uL14 family. In terms of assembly, part of the 50S ribosomal subunit.

The protein localises to the plastid. The protein resides in the chloroplast. Binds to 23S rRNA. The protein is Large ribosomal subunit protein uL14c of Adiantum capillus-veneris (Maidenhair fern).